The sequence spans 268 residues: Tropinone reductase homolog (268 aa).

21-45 (LVTGGTRGIGYAIVEELANFGAEVY) is a binding site for NADP(+). Ser154 is a binding site for substrate. Tyr167 acts as the Proton acceptor in catalysis.

Belongs to the short-chain dehydrogenases/reductases (SDR) family.

In Datura stramonium (Jimsonweed), this protein is Tropinone reductase homolog.